A 225-amino-acid chain; its full sequence is 7-cyano-7-deazaguanine synthase (225 aa).

7–17 (LSGGMDSTTLL) provides a ligand contact to ATP. Residues cysteine 183, cysteine 191, cysteine 194, and cysteine 197 each contribute to the Zn(2+) site.

Belongs to the QueC family. In terms of assembly, homodimer. The cofactor is Zn(2+).

The enzyme catalyses 7-carboxy-7-deazaguanine + NH4(+) + ATP = 7-cyano-7-deazaguanine + ADP + phosphate + H2O + H(+). It participates in purine metabolism; 7-cyano-7-deazaguanine biosynthesis. Its function is as follows. Catalyzes the ATP-dependent conversion of 7-carboxy-7-deazaguanine (CDG) to 7-cyano-7-deazaguanine (preQ(0)). In Caldicellulosiruptor saccharolyticus (strain ATCC 43494 / DSM 8903 / Tp8T 6331), this protein is 7-cyano-7-deazaguanine synthase.